Reading from the N-terminus, the 129-residue chain is Glycine cleavage system H protein (129 aa).

The 83-residue stretch at 24–106 (TYTVGITEHA…YAGGWIFKIK (83 aa)) folds into the Lipoyl-binding domain. N6-lipoyllysine is present on K65.

Belongs to the GcvH family. As to quaternary structure, the glycine cleavage system is composed of four proteins: P, T, L and H. The cofactor is (R)-lipoate.

The glycine cleavage system catalyzes the degradation of glycine. The H protein shuttles the methylamine group of glycine from the P protein to the T protein. The chain is Glycine cleavage system H protein from Escherichia fergusonii (strain ATCC 35469 / DSM 13698 / CCUG 18766 / IAM 14443 / JCM 21226 / LMG 7866 / NBRC 102419 / NCTC 12128 / CDC 0568-73).